The primary structure comprises 240 residues: Homeobox protein DLX-4 (240 aa).

Residues 80–120 (QPLCGPAEHPQELEADSEKPRLSPEPSERRPQAPAKKLRKP) form a disordered region. Basic and acidic residues predominate over residues 88–110 (HPQELEADSEKPRLSPEPSERRP). The segment at residues 117–176 (LRKPRTIYSSLQLQHLNQRFQHTQYLALPERAQLAAQLGLTQTQVKIWFQNKRSKYKKLL) is a DNA-binding region (homeobox).

Belongs to the distal-less homeobox family. In terms of tissue distribution, expressed in leukemia cells and placenta. Also expressed in kidney and fetal liver.

The protein localises to the nucleus. In terms of biological role, may play a role in determining the production of hemoglobin S. May act as a repressor. During embryonic development, plays a role in palatogenesis. The sequence is that of Homeobox protein DLX-4 (DLX4) from Homo sapiens (Human).